The following is a 147-amino-acid chain: Hemoglobin subunit deltaH (147 aa).

One can recognise a Globin domain in the interval 3 to 147; it reads RLTDSEKAEV…MANALAHKYH (145 aa). His-64 and His-93 together coordinate heme b.

It belongs to the globin family. Heterotetramer of two delta chains and two alpha chains. In terms of tissue distribution, red blood cells.

This Dendrohyrax dorsalis (Beecroft's tree hyrax) protein is Hemoglobin subunit deltaH (HBD).